The primary structure comprises 33 residues: Trypsin inhibitor 1 (33 aa).

3 disulfides stabilise this stretch: C1/C17, C8/C21, and C16/C32.

Expressed in leaves and fruit flesh (at protein level).

Its function is as follows. Inhibits trypsin (IC(50)=471 nM). This chain is Trypsin inhibitor 1, found in Beta vulgaris subsp. vulgaris (Beet).